The following is a 45-amino-acid chain: uncharacterized protein (45 aa).

A helical membrane pass occupies residues leucine 10–isoleucine 27.

It is found in the membrane. This is an uncharacterized protein from Dictyostelium discoideum (Social amoeba).